A 535-amino-acid chain; its full sequence is Sucrose transport protein SUT5 (535 aa).

Residues 1–53 (MEEGRRGDREAKSAAGWTALSTTKTTLEEKRRLQANGSVGGDAGTSGFRRIVR) are Cytoplasmic-facing. A helical transmembrane segment spans residues 54–74 (LFFACMVAGGIQYGWALQLSL). Residues 75–87 (LSPYSQTLGISHS) are Extracellular-facing. A helical membrane pass occupies residues 88-108 (YVSLTWICGPIAGFVVQPIVG). At 109 to 122 (YYSDRCTMKMGRRR) the chain is on the cytoplasmic side. The helical transmembrane segment at 123–143 (PFILVGCLIICISVMIIGFSA) threads the bilayer. Residues 144 to 163 (DIGRHLGDTKEHCSTYTGPR) are Extracellular-facing. Residues 164–184 (WSAAMVYIVGFWFLDFANNTV) form a helical membrane-spanning segment. Residues 185-203 (QGPARAMMADLSAGHHGPN) are Cytoplasmic-facing. Residues 204-224 (VGQSIFSLWMAIGSVLGYLSG) traverse the membrane as a helical segment. The Extracellular portion of the chain corresponds to 225 to 249 (ANGKWHEWFPWLKTAACCDACANLK). Residues 250–270 (GAFFTAVLLIVVSMTVTMYLA) traverse the membrane as a helical segment. Residues 271–302 (DEMPLDKQDVDTSGGGGCAVFVDLFKSLRNLP) are Cytoplasmic-facing. A helical membrane pass occupies residues 303 to 323 (PAMFKVLAVTAVTWLSWFPFI). Residues 324–354 (QYNTDWMGREIYHGEPQGTAAKADVYDAGVR) lie on the Extracellular side of the membrane. A helical membrane pass occupies residues 355 to 375 (EGAMGLLFCSVALGVTSFVIP). The Cytoplasmic portion of the chain corresponds to 376–384 (KLCRRLTSK). Residues 385–405 (VVWSISNFLVFALMAVMVAVG) form a helical membrane-spanning segment. Residues 406–429 (MVSMRGYRPSLAAGLTGPDPTLKA) lie on the Extracellular side of the membrane. The chain crosses the membrane as a helical span at residues 430–450 (VALVVFALIGIPQAVLFSVPW). The Cytoplasmic segment spans residues 451–465 (AVASEVTAEEGGGQG). A helical transmembrane segment spans residues 466–486 (LAIGVLNIAIVVPQLVIALTA). Residues 487–498 (GPIDGAFNKGNT) lie on the Extracellular side of the membrane. A helical transmembrane segment spans residues 499 to 519 (PAFGIGGAFAFICGVLALIWL). Residues 520-535 (PKTRGVSNAAVVAGGH) are Cytoplasmic-facing.

This sequence belongs to the glycoside-pentoside-hexuronide (GPH) cation symporter transporter (TC 2.A.2.4) family. In terms of assembly, homodimer.

The protein resides in the cell membrane. The protein operates within glycan biosynthesis; sucrose metabolism. Functionally, responsible for the transport of sucrose into the cell, with the concomitant uptake of protons (symport system). May also transport other glucosides. The sequence is that of Sucrose transport protein SUT5 (SUT5) from Oryza sativa subsp. indica (Rice).